Consider the following 225-residue polypeptide: Uracil-DNA glycosylase (225 aa).

Asp65 acts as the Proton acceptor in catalysis.

It belongs to the uracil-DNA glycosylase (UDG) superfamily. UNG family.

Its subcellular location is the cytoplasm. It carries out the reaction Hydrolyzes single-stranded DNA or mismatched double-stranded DNA and polynucleotides, releasing free uracil.. In terms of biological role, excises uracil residues from the DNA which can arise as a result of misincorporation of dUMP residues by DNA polymerase or due to deamination of cytosine. In Bacillus cereus (strain AH187), this protein is Uracil-DNA glycosylase.